A 466-amino-acid polypeptide reads, in one-letter code: MQVVSVKKALAGGVEEGTKVEVRGWVRTRRDSKAGISFVNVSDGSTFDPIQVVAPNSLPNYEKEILHLTAGCSVISRGTLVKSQGKGQAYEVQADEVQVLGFVDDPDTYPIQPKQHTLEFLRDVAHLRVRTNTFSAVTRVRHRAAQAVHRFFDEEGFFWVNTPIITASDAEGAGQMFRVSTLDAVNPPRTSDGKIDWHKDFFGKEAYLTVSGQLNAEAYALAMSKVYTFGPTFRAENSNTTRHLAEFWMIEPEVAFADLNEDANLAERFLKHVFKAVLNDCAPDLKFFEERVQKGVIERMEKFINSSFERIDYTEAVEILKKAKKKFEFEPEWGKDLQTEHERYLTEEHVGRPVVVMNYPEAIKSFYMRLNDDGKTVAAMDVLAPGIGEIIGGSQREERLDVLDQRIQKFGLKPESYQWYRDLRRYGSVPHAGFGLGFERLIVYMCGLQNIRDAIPYPRVPGSAAF.

Belongs to the class-II aminoacyl-tRNA synthetase family. As to quaternary structure, homodimer.

The protein localises to the cytoplasm. It carries out the reaction tRNA(Asn) + L-asparagine + ATP = L-asparaginyl-tRNA(Asn) + AMP + diphosphate + H(+). The chain is Asparagine--tRNA ligase from Myxococcus xanthus (strain DK1622).